Consider the following 361-residue polypeptide: MSIHTDDFGQGGFAQGGFPPDKAPDKLRMISAAPVSRGEEAMERALRPKLLQEYVGQAKAREQLEIFIGAARKRNEALDHVLLFGPPGLGKTTLSHIIAAELGVNLRQTSGPVLEKPKDLAALLTNLEANDVLFIDEIHRLSPVVEEILYPALEDYQIDIMIGEGPAARSIKLDLQPFTLVGATTRAGMLTNPLRDRFGIVARLEFYTAEELARIVRRSAGLLNAPIDDEGAFEIARRSRGTPRIANRLLRRVRDYADVRGDGSITRELADRALAMLDVDPQGFDIMDRKLLEAVVHRFDGGPVGLDNIAASIGEEAGTIEDVIEPYLIQQGFLQRTPRGRMATQAAYRHLGLPVPGDDAS.

Residues 1–25 are disordered; that stretch reads MSIHTDDFGQGGFAQGGFPPDKAPD. Positions 5-207 are large ATPase domain (RuvB-L); sequence TDDFGQGGFA…FGIVARLEFY (203 aa). ATP is bound by residues leucine 46, arginine 47, glycine 88, lysine 91, threonine 92, threonine 93, 154 to 156, arginine 197, tyrosine 207, and arginine 244; that span reads EDY. Residue threonine 92 participates in Mg(2+) binding. The interval 208–278 is small ATPAse domain (RuvB-S); sequence TAEELARIVR…LADRALAMLD (71 aa). Residues 281 to 361 form a head domain (RuvB-H) region; that stretch reads PQGFDIMDRK…GLPVPGDDAS (81 aa). Positions 336 and 341 each coordinate DNA.

Belongs to the RuvB family. In terms of assembly, homohexamer. Forms an RuvA(8)-RuvB(12)-Holliday junction (HJ) complex. HJ DNA is sandwiched between 2 RuvA tetramers; dsDNA enters through RuvA and exits via RuvB. An RuvB hexamer assembles on each DNA strand where it exits the tetramer. Each RuvB hexamer is contacted by two RuvA subunits (via domain III) on 2 adjacent RuvB subunits; this complex drives branch migration. In the full resolvosome a probable DNA-RuvA(4)-RuvB(12)-RuvC(2) complex forms which resolves the HJ.

It localises to the cytoplasm. It carries out the reaction ATP + H2O = ADP + phosphate + H(+). The RuvA-RuvB-RuvC complex processes Holliday junction (HJ) DNA during genetic recombination and DNA repair, while the RuvA-RuvB complex plays an important role in the rescue of blocked DNA replication forks via replication fork reversal (RFR). RuvA specifically binds to HJ cruciform DNA, conferring on it an open structure. The RuvB hexamer acts as an ATP-dependent pump, pulling dsDNA into and through the RuvAB complex. RuvB forms 2 homohexamers on either side of HJ DNA bound by 1 or 2 RuvA tetramers; 4 subunits per hexamer contact DNA at a time. Coordinated motions by a converter formed by DNA-disengaged RuvB subunits stimulates ATP hydrolysis and nucleotide exchange. Immobilization of the converter enables RuvB to convert the ATP-contained energy into a lever motion, pulling 2 nucleotides of DNA out of the RuvA tetramer per ATP hydrolyzed, thus driving DNA branch migration. The RuvB motors rotate together with the DNA substrate, which together with the progressing nucleotide cycle form the mechanistic basis for DNA recombination by continuous HJ branch migration. Branch migration allows RuvC to scan DNA until it finds its consensus sequence, where it cleaves and resolves cruciform DNA. The sequence is that of Holliday junction branch migration complex subunit RuvB from Delftia acidovorans (strain DSM 14801 / SPH-1).